The primary structure comprises 482 residues: NADH-quinone oxidoreductase subunit N (482 aa).

Transmembrane regions (helical) follow at residues 10 to 30, 44 to 64, 77 to 97, 113 to 133, 166 to 186, 206 to 226, 243 to 265, 277 to 296, 302 to 322, 328 to 348, 374 to 394, 397 to 417, and 451 to 471; these read ALGP…LILY, VGAI…PLGA, GFAR…LLLA, ILIV…DLIG, FVLG…VYGF, LGLV…LAAV, VTAF…VFIG, IIVF…AIGQ, LMAY…AAGT, GVVV…AVIL, AFCL…AGFF, FYVF…IGVV, and IVLA…APLV.

This sequence belongs to the complex I subunit 2 family. In terms of assembly, NDH-1 is composed of 14 different subunits. Subunits NuoA, H, J, K, L, M, N constitute the membrane sector of the complex.

It localises to the cell inner membrane. It carries out the reaction a quinone + NADH + 5 H(+)(in) = a quinol + NAD(+) + 4 H(+)(out). In terms of biological role, NDH-1 shuttles electrons from NADH, via FMN and iron-sulfur (Fe-S) centers, to quinones in the respiratory chain. The immediate electron acceptor for the enzyme in this species is believed to be ubiquinone. Couples the redox reaction to proton translocation (for every two electrons transferred, four hydrogen ions are translocated across the cytoplasmic membrane), and thus conserves the redox energy in a proton gradient. The chain is NADH-quinone oxidoreductase subunit N from Methylobacterium nodulans (strain LMG 21967 / CNCM I-2342 / ORS 2060).